Consider the following 839-residue polypeptide: Lon protease (839 aa).

The Lon N-terminal domain occupies 31–224 (LFLIPIKSRP…KVLLFLKKEI (194 aa)). 377-384 (GPPGVGKT) serves as a coordination point for ATP. One can recognise a Lon proteolytic domain in the interval 613-790 (ASVPGTALGL…EEVALLLFDE (178 aa)). Active-site residues include S696 and K739. The disordered stretch occupies residues 807-839 (IVNPTRKLSPKKKTTQKQKLSLSKQKGNNQKKK). Low complexity predominate over residues 823–832 (KQKLSLSKQK).

The protein belongs to the peptidase S16 family. As to quaternary structure, homohexamer. Organized in a ring with a central cavity.

The protein localises to the cytoplasm. It carries out the reaction Hydrolysis of proteins in presence of ATP.. In terms of biological role, ATP-dependent serine protease that mediates the selective degradation of mutant and abnormal proteins as well as certain short-lived regulatory proteins. Required for cellular homeostasis and for survival from DNA damage and developmental changes induced by stress. Degrades polypeptides processively to yield small peptide fragments that are 5 to 10 amino acids long. Binds to DNA in a double-stranded, site-specific manner. This Leptospira interrogans serogroup Icterohaemorrhagiae serovar copenhageni (strain Fiocruz L1-130) protein is Lon protease.